The primary structure comprises 281 residues: 16S rRNA (guanine(1405)-N(7))-methyltransferase (281 aa).

Residues tyrosine 60, 105–107 (HTS), arginine 111, glycine 136, aspartate 160, 186–187 (QG), phenylalanine 203, and glutamine 212 contribute to the S-adenosyl-L-methionine site.

Belongs to the methyltransferase superfamily. Aminoglycoside resistance family.

The enzyme catalyses guanosine(1405) in 16S rRNA + S-adenosyl-L-methionine = N(7)-methylguanosine(1405) in 16S rRNA + S-adenosyl-L-homocysteine. Specifically methylates the N(7) position of guanine 1405 in 16S rRNA. Confers resistance to various aminoglycosides, including gentamicin and kanamycin. This is 16S rRNA (guanine(1405)-N(7))-methyltransferase (rmtC) from Proteus mirabilis.